The following is a 593-amino-acid chain: UvrABC system protein C (593 aa).

Residues 14-91 enclose the GIY-YIG domain; the sequence is DSPGCYLHKD…IQENMPKYNI (78 aa). In terms of domain architecture, UVR spans 196–231; that stretch reads NKIVNGLTEKMKSAAMTMEFERAAEYRDLIEAISLL.

Belongs to the UvrC family. In terms of assembly, interacts with UvrB in an incision complex.

It is found in the cytoplasm. Its function is as follows. The UvrABC repair system catalyzes the recognition and processing of DNA lesions. UvrC both incises the 5' and 3' sides of the lesion. The N-terminal half is responsible for the 3' incision and the C-terminal half is responsible for the 5' incision. The protein is UvrABC system protein C of Streptococcus agalactiae serotype Ia (strain ATCC 27591 / A909 / CDC SS700).